The primary structure comprises 436 residues: Glutamate-1-semialdehyde 2,1-aminomutase (436 aa).

Residue K274 is modified to N6-(pyridoxal phosphate)lysine.

The protein belongs to the class-III pyridoxal-phosphate-dependent aminotransferase family. HemL subfamily. Homodimer. Requires pyridoxal 5'-phosphate as cofactor.

Its subcellular location is the cytoplasm. The catalysed reaction is (S)-4-amino-5-oxopentanoate = 5-aminolevulinate. The protein operates within porphyrin-containing compound metabolism; protoporphyrin-IX biosynthesis; 5-aminolevulinate from L-glutamyl-tRNA(Glu): step 2/2. The protein is Glutamate-1-semialdehyde 2,1-aminomutase of Albidiferax ferrireducens (strain ATCC BAA-621 / DSM 15236 / T118) (Rhodoferax ferrireducens).